The primary structure comprises 148 residues: Prefoldin subunit alpha (148 aa).

This sequence belongs to the prefoldin subunit alpha family. In terms of assembly, heterohexamer of two alpha and four beta subunits.

The protein resides in the cytoplasm. Molecular chaperone capable of stabilizing a range of proteins. Seems to fulfill an ATP-independent, HSP70-like function in archaeal de novo protein folding. The sequence is that of Prefoldin subunit alpha (pfdA) from Pyrococcus horikoshii (strain ATCC 700860 / DSM 12428 / JCM 9974 / NBRC 100139 / OT-3).